Reading from the N-terminus, the 346-residue chain is N-acetyl-gamma-glutamyl-phosphate reductase (346 aa).

Cys-149 is an active-site residue.

Belongs to the NAGSA dehydrogenase family. Type 1 subfamily.

Its subcellular location is the cytoplasm. It carries out the reaction N-acetyl-L-glutamate 5-semialdehyde + phosphate + NADP(+) = N-acetyl-L-glutamyl 5-phosphate + NADPH + H(+). It functions in the pathway amino-acid biosynthesis; L-arginine biosynthesis; N(2)-acetyl-L-ornithine from L-glutamate: step 3/4. Functionally, catalyzes the NADPH-dependent reduction of N-acetyl-5-glutamyl phosphate to yield N-acetyl-L-glutamate 5-semialdehyde. The sequence is that of N-acetyl-gamma-glutamyl-phosphate reductase from Pelobacter propionicus (strain DSM 2379 / NBRC 103807 / OttBd1).